A 287-amino-acid chain; its full sequence is Bifunctional protein FolD (287 aa).

Residues glycine 165–serine 167, serine 190, and isoleucine 231 each bind NADP(+).

It belongs to the tetrahydrofolate dehydrogenase/cyclohydrolase family. Homodimer.

It catalyses the reaction (6R)-5,10-methylene-5,6,7,8-tetrahydrofolate + NADP(+) = (6R)-5,10-methenyltetrahydrofolate + NADPH. The catalysed reaction is (6R)-5,10-methenyltetrahydrofolate + H2O = (6R)-10-formyltetrahydrofolate + H(+). The protein operates within one-carbon metabolism; tetrahydrofolate interconversion. Functionally, catalyzes the oxidation of 5,10-methylenetetrahydrofolate to 5,10-methenyltetrahydrofolate and then the hydrolysis of 5,10-methenyltetrahydrofolate to 10-formyltetrahydrofolate. This Carboxydothermus hydrogenoformans (strain ATCC BAA-161 / DSM 6008 / Z-2901) protein is Bifunctional protein FolD.